Consider the following 450-residue polypeptide: Glucose-6-phosphate isomerase (450 aa).

The active-site Proton donor is Glu291. Catalysis depends on residues His312 and Lys426.

The protein belongs to the GPI family.

The protein localises to the cytoplasm. The enzyme catalyses alpha-D-glucose 6-phosphate = beta-D-fructose 6-phosphate. It functions in the pathway carbohydrate biosynthesis; gluconeogenesis. Its pathway is carbohydrate degradation; glycolysis; D-glyceraldehyde 3-phosphate and glycerone phosphate from D-glucose: step 2/4. Catalyzes the reversible isomerization of glucose-6-phosphate to fructose-6-phosphate. The sequence is that of Glucose-6-phosphate isomerase from Clostridium botulinum (strain Loch Maree / Type A3).